A 780-amino-acid chain; its full sequence is Chloride channel protein CLC-b (780 aa).

The interval 1–28 (MVEEDLNQIGGNSNYNGEGGDPESNTLN) is disordered. 12 consecutive transmembrane segments (helical) span residues 87 to 107 (TLACLVGLFTGLIATLINLAV), 130 to 150 (GLMVLVGANLGLTLVASVLCV), 177 to 197 (FGATTMIVKIVGSIGAVAAGL), 205 to 225 (LVHIGSCIASLLGQGGTDNHR), 247 to 267 (GSAAGVCAAFRSPVGGVLFAL), 277 to 297 (ALLWRTFFSTAVVVVVLREFI), 327 to 347 (VTDIIPVMLIGVIGGILGSLY), 370 to 390 (VLLSLTVSLFTSVCLYGLPFL), 452 to 472 (MGSLWIFFVLYCILGLFTFGI), 477 to 497 (GLFLPIILMGAAYGRMLGAAM), 509 to 529 (AVLGAAALMAGSMRMTVSLCV), and 530 to 550 (IFLELTNNLLLLPITMIVLLI). CBS domains follow at residues 594 to 663 (AKPP…FLTE) and 708 to 770 (TNTT…AFPL). A helical transmembrane segment spans residues 735–755 (HLLIVPKIQASGMCPVVGILT).

It belongs to the chloride channel (TC 2.A.49) family. Homodimer. Interacts with PP2A5. As to expression, broadly expressed in the plant.

The protein resides in the membrane. Voltage-gated chloride channel. In Arabidopsis thaliana (Mouse-ear cress), this protein is Chloride channel protein CLC-b (CLC-B).